The following is a 363-amino-acid chain: UDP-3-O-acylglucosamine N-acyltransferase (363 aa).

His259 serves as the catalytic Proton acceptor.

It belongs to the transferase hexapeptide repeat family. LpxD subfamily. As to quaternary structure, homotrimer.

It carries out the reaction a UDP-3-O-[(3R)-3-hydroxyacyl]-alpha-D-glucosamine + a (3R)-hydroxyacyl-[ACP] = a UDP-2-N,3-O-bis[(3R)-3-hydroxyacyl]-alpha-D-glucosamine + holo-[ACP] + H(+). The protein operates within bacterial outer membrane biogenesis; LPS lipid A biosynthesis. In terms of biological role, catalyzes the N-acylation of UDP-3-O-acylglucosamine using 3-hydroxyacyl-ACP as the acyl donor. Is involved in the biosynthesis of lipid A, a phosphorylated glycolipid that anchors the lipopolysaccharide to the outer membrane of the cell. The chain is UDP-3-O-acylglucosamine N-acyltransferase from Ruegeria pomeroyi (strain ATCC 700808 / DSM 15171 / DSS-3) (Silicibacter pomeroyi).